Consider the following 170-residue polypeptide: MGNEASYPLEMCSHFDADEIKRLGKRFKKLDLDNSGSLSVEEFMSLPELQQNPLVQRVIDIFDTDGNGEVDFKEFIEGVSQFSVKGDKEQKLRFAFRIYDMDKDGYISNGELFQVLKMMVGNNLKDTQLQQIVDKTIINADKDGDGRISFEEFCAVVGGLDIHKKMVVDV.

Gly-2 carries the N-myristoyl glycine lipid modification. 4 consecutive EF-hand domains span residues 18 to 46 (DEIK…FMSL), 50 to 85 (QQNP…FSVK), 87 to 122 (DKEQ…MVGN), and 128 to 163 (QLQQ…LDIH). Ca(2+) contacts are provided by Asp-31, Asp-33, Ser-35, Ser-37, Glu-42, Asp-63, Asp-65, Asn-67, Glu-69, Glu-74, Asp-100, Asp-102, Asp-104, Tyr-106, and Glu-111. Tyr-106 bears the Phosphotyrosine mark. The segment at 131-136 (QIVDKT) is calcineurin A binding. 5 residues coordinate Ca(2+): Asp-141, Asp-143, Asp-145, Arg-147, and Glu-152.

Belongs to the calcineurin regulatory subunit family. In terms of assembly, forms a complex composed of a calmodulin-dependent catalytic subunit (also known as calcineurin A) and a regulatory Ca(2+)-binding subunit (also known as calcineurin B). There are three catalytic subunits, each encoded by a separate gene (PPP3CA, PPP3CB, and PPP3CC) and two regulatory subunits which are also encoded by separate genes (PPP3R1 and PPP3R2). The interaction between the 2 subunits is Ca(2+)-independent. Interacts with catalytic subunit PPP3CA/calcineurin A. Interacts with catalytic subunit PPP3CB/calcineurin A. Interacts with CIB1 (via C-terminal region); the interaction increases upon cardiomyocyte hypertrophy. Interacts with RCAN1. Interacts with SPATA33 (via PQIIIT motif).

The protein resides in the cytoplasm. Its subcellular location is the cytosol. It localises to the cell membrane. The protein localises to the sarcolemma. Functionally, regulatory subunit of calcineurin, a calcium-dependent, calmodulin stimulated protein phosphatase. Confers calcium sensitivity. This chain is Calcineurin subunit B type 1 (PPP3R1), found in Bos taurus (Bovine).